The following is a 440-amino-acid chain: MGALLALLDPVQPTRAPDCGGILTPLGLSYLAEVSKPHAEVVLRQDLMPKEPQTCSLAPWSPAGTELPAVKVADLWLSVIPEAGLRLGIEVELRIAPLHTVPMPVRISIRADLHVDMGPDGNLQLLTSACRPTVQAQSTREAESKSSRSILDKVVDVDKLCLDVSKLLLFPNEQLMSLTALFPVTPNCQLQYLALAAPVFSKQGIALSLQTTFQVAGAVVPVPVSPVPFSMPELASTSTSHLILALSEHFYTSLYFTLERAGAFNMTIPSMLTTATLAQKITQVGSLYHEDLPITLSAALRSSPRVVLEEGRAALKLFLTVHIGAGSPDFQSFLSVSADVTRAGLQLSVSDTRMMISTAVIEDAELSLAASNVGLVRAALLEELFLAPVCQQVPAWMDDVLREGVHLPHMSHFTYTDVNVVVHKDYVLVPCKLKLRSTMA.

Expressed in developing retina and brain, but not in heart, liver or kidney. In brain, located in a narrow strip in the boundary between the ventricular zone (consisting of proliferating cells) and the intermediate zone (consisting of postmitotic, differentiating cells). Expressed in all major regions of the developing brain, including the myelencephalon, the mesencephalon, the telencephalon and the diencephalon. In the developing retina, expression is scattered across the retinal neural epithelium. Expressed in egg white (at protein level). Expressed in the magnum of the oviduct (at protein level).

Its function is as follows. May play a role in the developmental transition from cell proliferation to cell differentiation during neurogenesis. The polypeptide is Protein TENP (TENP) (Gallus gallus (Chicken)).